The primary structure comprises 652 residues: 2',3'-cyclic-nucleotide 2'-phosphodiesterase/3'-nucleotidase (652 aa).

A signal peptide spans 1 to 24 (MFKRPLTLSLLASLIALTTSTAQA). A divalent metal cation contacts are provided by Asp-36, His-38, Asp-81, Asn-121, His-230, His-262, and His-264. Substrate-binding positions include Tyr-445 and 549–555 (YRAYSGK).

This sequence belongs to the 5'-nucleotidase family. The cofactor is a divalent metal cation.

The protein resides in the periplasm. The catalysed reaction is a nucleoside 2',3'-cyclic phosphate + H2O = a nucleoside 3'-phosphate + H(+). It catalyses the reaction a ribonucleoside 3'-phosphate + H2O = a ribonucleoside + phosphate. Its function is as follows. This bifunctional enzyme catalyzes two consecutive reactions during ribonucleic acid degradation. Converts a 2',3'-cyclic nucleotide to a 3'-nucleotide and then the 3'-nucleotide to the corresponding nucleoside and phosphate. This chain is 2',3'-cyclic-nucleotide 2'-phosphodiesterase/3'-nucleotidase (cpdB), found in Yersinia enterocolitica.